The sequence spans 153 residues: uncharacterized protein (153 aa).

This is an uncharacterized protein from Bacillus subtilis (strain 168).